The sequence spans 260 residues: Phosphate import ATP-binding protein PstB 1 (260 aa).

An ABC transporter domain is found at 13-255; it reads VRVRDLNLWY…PHTKKAEDYI (243 aa). 45 to 52 provides a ligand contact to ATP; that stretch reads GPSGCGKS.

Belongs to the ABC transporter superfamily. Phosphate importer (TC 3.A.1.7) family. In terms of assembly, the complex is composed of two ATP-binding proteins (PstB), two transmembrane proteins (PstC and PstA) and a solute-binding protein (PstS).

It is found in the cell inner membrane. It carries out the reaction phosphate(out) + ATP + H2O = ADP + 2 phosphate(in) + H(+). Functionally, part of the ABC transporter complex PstSACB involved in phosphate import. Responsible for energy coupling to the transport system. This is Phosphate import ATP-binding protein PstB 1 from Chromohalobacter salexigens (strain ATCC BAA-138 / DSM 3043 / CIP 106854 / NCIMB 13768 / 1H11).